The sequence spans 1025 residues: MEDHPPKPSIPTADASLSNHGRGGPSLDARFAYFCKTGLSLNENTYTEAMKLFSESKHLLSTTISAIGTGTPEEAERYWFAFVLYSVKRLSEANADDSSQGTGGDGFTLCQILRVAKLNIVDFFKELPQFIVKAGPILSNQYGTDWEKRLEAKELQANFVHLSLLSKYYKRAFREFFLTSDAKVGEQSTAAIASGYVSDYHRFGWLLFLALRTHAFSRFKDLVTCTNGLVAILAILIIHIPVRVRNFNLHDSPRFVMKGSKGVDLLASLCNIYETSEDELRKTMEKANDLIEDILKKNRRSASECRSENLENIATDGLIYFEDLLDDTSLPSSLNILGKDYADATRNKGELDERVFVNEEDSLLGPGSLSGGAMNISGAKRKIDSIASPARTITSPLAPYCSPSASHAKAIPCGSNSKMAATPVTTAMTTAKWLRTIISPLPPKPSPELERFLSSCDSDVTTDVIRRANIILEAIFPSSGLGEECITGGLQCTSLMDSIWAEQRRLEALKLYYRVLQAMCTAEAQILHANNLTSLLTNERFHRCMLACSAELVLATHKTATMLFPAVLERTGITAFDLSKMIGVSFRLKESLPRELKRHLNSLEERLLESMVWEKGSSMYNSLTVARPALSAETNRLCLLAEPMPSLDAIAMHMNITCGSLPCLPSLQKNEILLGQNGDIQSPKRLCTEYRSVLVERNSFTSPVKDRLLTFNTPKSKLPPPALQSAFASPTRPNPGAGGETCAETAINVFFSKIVKLGAFRINGMVERLQLSQEIREIIFRLFQQILSQRTTLFFNRHIDQIILCCFYGVAKISQLSLTFKEIISTIESNPQCKPQVFRSVFVDWSSARRHGKTGQEHVDIITFYNEIFIPAVKPLLVELAPVGTAQKNRNSETINGTDGQCPGSPKISPFPSLPDMSPKKVSAIHNVYVSPLRSSKMDALISNGSKSYYACVGESTHAYQSLSKDLTAINNRLNGNRKLRGTLNFDEVDVGLVSDTLVANSLWLQNGSCASSSGAPVKSERLDS.

The disordered stretch occupies residues 1-20; sequence MEDHPPKPSIPTADASLSNH. The interval 422–623 is domain A; sequence TPVTTAMTTA…EKGSSMYNSL (202 aa). The segment at 422–875 is pocket; sequence TPVTTAMTTA…NEIFIPAVKP (454 aa). The tract at residues 624 to 744 is spacer; it reads TVARPALSAE…PGAGGETCAE (121 aa). Positions 745-875 are domain B; sequence TAINVFFSKI…NEIFIPAVKP (131 aa).

It belongs to the retinoblastoma protein (RB) family.

It is found in the nucleus. In terms of biological role, regulator of biological processes that recruits a histone deacetylase to control gene transcription. May play a role in the entry into mitosis, negatively regulating the cell proliferation. Formation of stable complexes with geminiviridae replication-associated proteins may create a cellular environment which favors viral DNA replication. This is Retinoblastoma-related protein (pRB) from Camellia sinensis (Tea plant).